A 196-amino-acid chain; its full sequence is Large ribosomal subunit protein eL15 (196 aa).

The span at 162–172 (RGKTSAGRRAR) shows a compositional bias: basic residues. The disordered stretch occupies residues 162–196 (RGKTSAGRRARGLQNRGKGTEGLRPSTNADKRNKS).

The protein belongs to the eukaryotic ribosomal protein eL15 family.

This chain is Large ribosomal subunit protein eL15, found in Halobacterium salinarum (strain ATCC 29341 / DSM 671 / R1).